The chain runs to 66 residues: Putative transmembrane protein ORF66 (66 aa).

The Cytoplasmic portion of the chain corresponds to 1–6 (MSDVDD). The helical transmembrane segment at 7–27 (TIVDSIAIVGAILIGIFLIVV) threads the bilayer. Residues 28-39 (SVSNTSLFNNTE) are Extracellular-facing. The chain crosses the membrane as a helical span at residues 40-60 (YDSMINSVLVIISSVIAYTLG). Residues 61–66 (KRRSKS) are Cytoplasmic-facing.

It localises to the host membrane. In Acidianus filamentous virus 2 (isolate Italy/Pozzuoli) (AFV-2), this protein is Putative transmembrane protein ORF66.